The chain runs to 589 residues: GTPase LSG1-2 (589 aa).

A disordered region spans residues 1-26 (MGKSEKTSLGRSLVKHHNHMIQESKD). Positions 158-366 (WRQLWRVLER…LCDCPGLVFP (209 aa)) constitute a CP-type G domain. The DARXP motif motif lies at 176 to 180 (DARDP). A G4 region spans residues 206-209 (NKAD). Position 206 to 209 (206 to 209 (NKAD)) interacts with GTP. The interval 237–239 (AAT) is G5. Residues 315–322 (GYPNVGKS) form a G1 region. 318 to 323 (NVGKSS) is a binding site for GTP. Positions 341–345 (GKTKH) are G2. The interval 359–362 (DCPG) is G3. Residue G362 coordinates GTP. The segment covering 495–509 (GSESDDSAVGDETEN) has biased composition (acidic residues). Disordered regions lie at residues 495–515 (GSES…VPGI) and 534–589 (SKKV…LTMR). The Nuclear localization signal signature appears at 534–541 (SKKVTAKK). The span at 534 to 558 (SKKVTAKKQTASHKQHKKPQRKKDR) shows a compositional bias: basic residues. The segment covering 580 to 589 (PANTGPLTMR) has biased composition (polar residues).

This sequence belongs to the TRAFAC class YlqF/YawG GTPase family. In terms of tissue distribution, ubiquitous, with the highest expression in reproductive and strongly dividing tissues.

The protein resides in the cytoplasm. It is found in the nucleus. GTPase involved in ribosome biogenesis. Binds to 23S rRNA and associates with 60S pre-ribosomes. Involved in early cotyledon and leaf development. The protein is GTPase LSG1-2 of Arabidopsis thaliana (Mouse-ear cress).